A 117-amino-acid polypeptide reads, in one-letter code: Immunoglobulin heavy variable 1-24 (117 aa).

The first 19 residues, 1 to 19 (MDCTWRILFLVAAATGTHA), serve as a signal peptide directing secretion. The interval 20-44 (QVQLVQSGAEVKKPGASVKVSCKVS) is framework-1. In terms of domain architecture, Ig-like spans 20–117 (QVQLVQSGAE…EDTAVYYCAT (98 aa)). Residues cysteine 41 and cysteine 115 are joined by a disulfide bond. The interval 45-52 (GYTLTELS) is complementarity-determining-1. The tract at residues 53–69 (MHWVRQAPGKGLEWMGG) is framework-2. The interval 70–77 (FDPEDGET) is complementarity-determining-2. The tract at residues 78 to 115 (IYAQKFQGRVTMTEDTSTDTAYMELSSLRSEDTAVYYC) is framework-3. Residues 116-117 (AT) form a complementarity-determining-3 region.

As to quaternary structure, immunoglobulins are composed of two identical heavy chains and two identical light chains; disulfide-linked.

It is found in the secreted. The protein localises to the cell membrane. In terms of biological role, v region of the variable domain of immunoglobulin heavy chains that participates in the antigen recognition. Immunoglobulins, also known as antibodies, are membrane-bound or secreted glycoproteins produced by B lymphocytes. In the recognition phase of humoral immunity, the membrane-bound immunoglobulins serve as receptors which, upon binding of a specific antigen, trigger the clonal expansion and differentiation of B lymphocytes into immunoglobulins-secreting plasma cells. Secreted immunoglobulins mediate the effector phase of humoral immunity, which results in the elimination of bound antigens. The antigen binding site is formed by the variable domain of one heavy chain, together with that of its associated light chain. Thus, each immunoglobulin has two antigen binding sites with remarkable affinity for a particular antigen. The variable domains are assembled by a process called V-(D)-J rearrangement and can then be subjected to somatic hypermutations which, after exposure to antigen and selection, allow affinity maturation for a particular antigen. This chain is Immunoglobulin heavy variable 1-24, found in Homo sapiens (Human).